The chain runs to 166 residues: 3-isopropylmalate dehydratase small subunit (166 aa).

It belongs to the LeuD family. LeuD type 2 subfamily. In terms of assembly, heterodimer of LeuC and LeuD.

The enzyme catalyses (2R,3S)-3-isopropylmalate = (2S)-2-isopropylmalate. The protein operates within amino-acid biosynthesis; L-leucine biosynthesis; L-leucine from 3-methyl-2-oxobutanoate: step 2/4. Catalyzes the isomerization between 2-isopropylmalate and 3-isopropylmalate, via the formation of 2-isopropylmaleate. The chain is 3-isopropylmalate dehydratase small subunit from Caldicellulosiruptor bescii (strain ATCC BAA-1888 / DSM 6725 / KCTC 15123 / Z-1320) (Anaerocellum thermophilum).